Here is a 350-residue protein sequence, read N- to C-terminus: Biotin synthase (350 aa).

Residues 41–268 enclose the Radical SAM core domain; that stretch reads NEVQISRLLS…KSRVRLSAGR (228 aa). The [4Fe-4S] cluster site is built by C56, C60, and C63. Residues C100, C131, C191, and R263 each contribute to the [2Fe-2S] cluster site.

The protein belongs to the radical SAM superfamily. Biotin synthase family. Homodimer. It depends on [4Fe-4S] cluster as a cofactor. [2Fe-2S] cluster is required as a cofactor.

It catalyses the reaction (4R,5S)-dethiobiotin + (sulfur carrier)-SH + 2 reduced [2Fe-2S]-[ferredoxin] + 2 S-adenosyl-L-methionine = (sulfur carrier)-H + biotin + 2 5'-deoxyadenosine + 2 L-methionine + 2 oxidized [2Fe-2S]-[ferredoxin]. Its pathway is cofactor biosynthesis; biotin biosynthesis; biotin from 7,8-diaminononanoate: step 2/2. Functionally, catalyzes the conversion of dethiobiotin (DTB) to biotin by the insertion of a sulfur atom into dethiobiotin via a radical-based mechanism. The chain is Biotin synthase from Shewanella halifaxensis (strain HAW-EB4).